The following is a 145-amino-acid chain: VHLTAEDRKEIAAILGKVNVDSLGGQCLARLIVVNPWSRRYFHDFGDLSSCDAICRNPKVLAHGAKVMRSIVEATKHLDNLREYYADLSVTHSLKFYVDPENFKLFSGIVIVCLALTLQTDFSCHKQLAFEKLMKGVSHALGHGY.

In terms of domain architecture, Globin spans 2-145; that stretch reads HLTAEDRKEI…GVSHALGHGY (144 aa). Residues His-63 and His-92 each contribute to the heme b site.

Belongs to the globin family. Minor hemoglobin is a tetramer of two alpha-2 chains and two beta-2 chains. In terms of tissue distribution, red blood cells.

Functionally, involved in oxygen transport from the lung to the various peripheral tissues. The protein is Hemoglobin subunit beta-2 (HBB2) of Triturus cristatus (Great crested newt).